A 192-amino-acid polypeptide reads, in one-letter code: Ion-translocating oxidoreductase complex subunit B (192 aa).

Residues 1 to 26 (MNAIWIAVAAVSLLGLAFGAILGYAS) are hydrophobic. In terms of domain architecture, 4Fe-4S spans 32–91 (EDDPVVEKIDEILPQSQCGQCGYPGCRPYAEAISCNGEKINRCAPGGEAVMLKIAELLNV). Cys49, Cys52, Cys57, Cys74, Cys117, Cys120, Cys123, Cys127, Cys147, Cys150, Cys153, and Cys157 together coordinate [4Fe-4S] cluster. 4Fe-4S ferredoxin-type domains are found at residues 108–137 (MVAVIDENNCIGCTKCIQACPVDAIVGATR) and 138–167 (AMHTVMSDLCTGCNLCVDPCPTHCISLQPV).

Belongs to the 4Fe4S bacterial-type ferredoxin family. RnfB subfamily. As to quaternary structure, the complex is composed of six subunits: RsxA, RsxB, RsxC, RsxD, RsxE and RsxG. Requires [4Fe-4S] cluster as cofactor.

It is found in the cell inner membrane. Functionally, part of a membrane-bound complex that couples electron transfer with translocation of ions across the membrane. Required to maintain the reduced state of SoxR. The chain is Ion-translocating oxidoreductase complex subunit B from Escherichia coli O139:H28 (strain E24377A / ETEC).